The sequence spans 381 residues: Magnesium transporter MRS2-I (381 aa).

Transmembrane regions (helical) follow at residues 316 to 336 and 353 to 373; these read LFLS…GIFG and WVVL…VAYA. The Required for magnesium transport activity motif lies at 336 to 338; sequence GMN.

Belongs to the CorA metal ion transporter (MIT) (TC 1.A.35.5) family.

It is found in the membrane. Magnesium transporter that may mediate the influx of magnesium. The protein is Magnesium transporter MRS2-I (MRS2-I) of Oryza sativa subsp. indica (Rice).